Reading from the N-terminus, the 443-residue chain is Xaa-Pro dipeptidase (443 aa).

Residues aspartate 246, aspartate 257, histidine 339, glutamate 384, and glutamate 423 each contribute to the Mn(2+) site.

The protein belongs to the peptidase M24B family. Bacterial-type prolidase subfamily. It depends on Mn(2+) as a cofactor.

The catalysed reaction is Xaa-L-Pro dipeptide + H2O = an L-alpha-amino acid + L-proline. In terms of biological role, splits dipeptides with a prolyl residue in the C-terminal position. The chain is Xaa-Pro dipeptidase from Serratia proteamaculans (strain 568).